The chain runs to 190 residues: Putative 3-methyladenine DNA glycosylase (190 aa).

It belongs to the DNA glycosylase MPG family.

This Deinococcus radiodurans (strain ATCC 13939 / DSM 20539 / JCM 16871 / CCUG 27074 / LMG 4051 / NBRC 15346 / NCIMB 9279 / VKM B-1422 / R1) protein is Putative 3-methyladenine DNA glycosylase.